A 527-amino-acid chain; its full sequence is Mitogen-activated protein kinase kinae MKK2 (527 aa).

2 disordered regions span residues 1-143 (MHDQ…SAGS) and 156-189 (IGST…DKDG). A compositionally biased stretch (low complexity) spans 107–129 (QQGQSASGGSESSAAHSRSGSFG). The segment covering 134 to 143 (RTSNPTSAGS) has biased composition (polar residues). Residues 177–189 (ERSDGGAGMDKDG) show a composition bias toward basic and acidic residues. The Protein kinase domain occupies 227–497 (IVELGGLGEG…PWRMLEHPWM (271 aa)). ATP-binding positions include 233-241 (LGEGAGGAV) and Lys-256.

This sequence belongs to the protein kinase superfamily. STE Ser/Thr protein kinase family. MAP kinase kinase subfamily. In terms of assembly, interacts with the adapter protein MST50.

It catalyses the reaction L-seryl-[protein] + ATP = O-phospho-L-seryl-[protein] + ADP + H(+). The enzyme catalyses L-threonyl-[protein] + ATP = O-phospho-L-threonyl-[protein] + ADP + H(+). Its function is as follows. Mitogen-activated protein kinase kinase; part of the MCK1-MKK2-MPS1 MAP kinase (MAPK) signal transduction cascade that is essential for appressorium formation, penetration and invasive growth. Beside its role in pathogenesis, the MPS1 cascade is active in conidiation and cellular stress responses. Targets downstream of the the MPS1-MAPK pathway include transcription factors MIG1 and SWI6, as well as GSK1 and MPG1. This chain is Mitogen-activated protein kinase kinae MKK2, found in Pyricularia oryzae (strain 70-15 / ATCC MYA-4617 / FGSC 8958) (Rice blast fungus).